The primary structure comprises 261 residues: Leukocyte receptor cluster member 1 homolog (261 aa).

Residues 1–261 (MNILPKKSWH…PRQQNPTPAH (261 aa)) form a disordered region. The segment covering 12–38 (RNKDNVARVRRDEAQAREEEKERERRV) has biased composition (basic and acidic residues). Residues 16–46 (NVARVRRDEAQAREEEKERERRVLLAQQEAR) adopt a coiled-coil conformation. At Ser59 the chain carries Phosphoserine. Basic and acidic residues-rich tracts occupy residues 78-109 (LFRELLEERKGVPRGNKEHEEEKRREKERQEK), 147-163 (PDEKIKNRLDPLKEMQK), and 171-211 (SSES…RARA). Positions 192 to 222 (SLEKLRAERLQREAAERARAEALLARVQGQV) form a coiled coil. Residues 212–228 (EALLARVQGQVSQQGQV) show a composition bias toward low complexity. Ser242 carries the phosphoserine modification.

This Mus musculus (Mouse) protein is Leukocyte receptor cluster member 1 homolog (Leng1).